A 329-amino-acid chain; its full sequence is Mitochondrial glycine transporter (329 aa).

Solcar repeat units follow at residues 19 to 103, 130 to 214, and 232 to 316; these read SKTT…LRQP, LSNW…LKRH, and SSSS…LILR. The next 6 membrane-spanning stretches (helical) occupy residues 25–50, 78–104, 136–161, 189–212, 236–262, and 291–309; these read FAAG…TRVQ, GTLP…RQPL, LGTG…VRYE, GFGA…EQLK, INFI…KTRL, and GLGL…AWTV.

The protein belongs to the mitochondrial carrier (TC 2.A.29) family. SLC25A38 subfamily.

It is found in the mitochondrion inner membrane. The enzyme catalyses glycine(in) = glycine(out). In terms of biological role, mitochondrial glycine transporter that imports glycine into the mitochondrial matrix. Plays an important role in providing glycine for the first enzymatic step in heme biosynthesis, the condensation of glycine with succinyl-CoA to produce 5-aminolevulinate (ALA) in the mitochondrial matrix. This chain is Mitochondrial glycine transporter, found in Aspergillus terreus (strain NIH 2624 / FGSC A1156).